Consider the following 281-residue polypeptide: UPF0500 protein C1orf216 homolog (281 aa).

The segment covering 1–12 (MFTIQKPDTVSH) has biased composition (polar residues). Positions 1–197 (MFTIQKPDTV…SSSDSDSISV (197 aa)) are disordered. Positions 45-74 (TYDKNENWSQDKKGGEEGENKSKSEDEHSS) are enriched in basic and acidic residues. Composition is skewed to low complexity over residues 92–102 (STGSEGISLSS), 147–161 (SSSLSIDSPDSVSAS), and 169–178 (PAPTTTPQEN). Residues 179–190 (PETEDSDVESSS) are compositionally biased toward acidic residues. A coiled-coil region spans residues 198 to 257 (TLSEAFQSLQDKEKLKEREKEKHHAQLTMYRRLALLRWIRALQQKVRDQQNRLQESFDTI).

Belongs to the UPF0500 family.

The chain is UPF0500 protein C1orf216 homolog from Xenopus laevis (African clawed frog).